A 276-amino-acid polypeptide reads, in one-letter code: Cerberus (276 aa).

The first 20 residues, 1–20, serve as a signal peptide directing secretion; sequence MLLCVLKIYIIFCLVNDGAG. N-linked (GlcNAc...) asparagine glycans are attached at residues Asn103, Asn118, and Asn160. 4 disulfide bridges follow: Cys175/Cys221, Cys189/Cys235, Cys199/Cys251, and Cys203/Cys253. The region spanning 175–259 is the CTCK domain; sequence CKTLPFTQNI…ECACEAHKNN (85 aa). An N-linked (GlcNAc...) asparagine glycan is attached at Asn234.

This sequence belongs to the DAN family. As to quaternary structure, the long chain interacts with nodal/nr-1, bmp4 and wnt8, thereby inhibiting their function. The short chain interacts with nodal/nr-1 but not bmp4 or wnt8. As to expression, expressed in the anterior endomesoderm of the early gastrula with expression expanded laterally around the margin at the endoderm/mesoderm boundary.

The protein resides in the secreted. In terms of biological role, inhibits wnt, nodal/nr-1 and bmp signaling in the embryo to promote head formation and anterior neural induction. Within the endoderm, acts as an essential mediator of nodal/nr-1-induced cardiogenesis in the overlying mesoderm. The polypeptide is Cerberus (Xenopus tropicalis (Western clawed frog)).